Reading from the N-terminus, the 713-residue chain is Transcription activator of gluconeogenesis CPC735_053490 (713 aa).

Positions 1–70 (MTANAINGPV…NAKDPLRPRR (70 aa)) are disordered. Over residues 19–56 (GDNNKSADTTMADQGTRPESQPQGQNNGAKPQNGQTKP) the composition is skewed to polar residues. Residues 77 to 105 (CFACQRAHLTCGDERPCQRCIKRGIQNAC) constitute a DNA-binding region (zn(2)-C6 fungal-type). Positions 145–159 (PLTRNGSNSKTNFYP) are enriched in polar residues. Disordered regions lie at residues 145–229 (PLTR…ASGQ), 274–318 (GAGE…LFGD), 541–564 (GGSS…GMDI), and 623–665 (GTTS…QRKW). Over residues 160-171 (QQQSSFNNFYQN) the composition is skewed to low complexity. Residues 191 to 212 (FPSQSPVSPTFNMTANPAASGN) are compositionally biased toward polar residues. Over residues 213 to 229 (QGLPSSLSASNSNASGQ) the composition is skewed to low complexity. 3 stretches are compositionally biased toward polar residues: residues 295–312 (SGTY…TGQP), 541–558 (GGSS…SFTP), and 649–659 (GASNGQSQHSL).

The protein belongs to the ERT1/acuK family.

It localises to the nucleus. In terms of biological role, transcription factor which regulates nonfermentable carbon utilization. Activator of gluconeogenetic genes. This is Transcription activator of gluconeogenesis CPC735_053490 from Coccidioides posadasii (strain C735) (Valley fever fungus).